The sequence spans 550 residues: Chaperonin GroEL 1 (550 aa).

Residues 30–33 (TLGP), Lys-51, 87–91 (DGTTT), Gly-415, and Asp-496 contribute to the ATP site.

It belongs to the chaperonin (HSP60) family. As to quaternary structure, forms a cylinder of 14 subunits composed of two heptameric rings stacked back-to-back. Interacts with the co-chaperonin GroES.

It is found in the cytoplasm. It carries out the reaction ATP + H2O + a folded polypeptide = ADP + phosphate + an unfolded polypeptide.. Functionally, together with its co-chaperonin GroES, plays an essential role in assisting protein folding. The GroEL-GroES system forms a nano-cage that allows encapsulation of the non-native substrate proteins and provides a physical environment optimized to promote and accelerate protein folding. This Rhodopseudomonas palustris (strain HaA2) protein is Chaperonin GroEL 1.